Here is a 1469-residue protein sequence, read N- to C-terminus: Accumulation-associated protein (1469 aa).

The first 52 residues, 1–52, serve as a signal peptide directing secretion; that stretch reads MGKRRQGPINKKVDFLPNKLNKYSIRKFTVGTASILLGSTLIFGSSSHEAKA. Disordered regions lie at residues 52-164, 486-511, and 528-1443; these read AAEE…SEPV, GIET…TPTT, and EIKP…QANE. Composition is skewed to polar residues over residues 75–94 and 110–125; these read ENTN…STLQ and KANS…SEAP. Basic and acidic residues predominate over residues 129–144; sequence DLARKEDIPAVSKNEE. Over residues 145-164 the composition is skewed to polar residues; that stretch reads LQSSQPNTDSKIEPTTSEPV. 7 G5 domains span residues 446-528, 574-656, 702-784, 830-912, 958-1040, 1086-1168, and 1211-1296; these read PKAV…GGEE, YGPV…GGEE, YGPV…GGEQ, and VTKY…GPTK. Residues 489–500 show a composition bias toward low complexity; that stretch reads TTTTPTYVNPNT. 2 stretches are compositionally biased toward basic and acidic residues: residues 528–537 and 589–613; these read EIKPGHKDEF and PFDK…KGEP. Low complexity predominate over residues 614 to 629; sequence GTKTITTPTTKNPLTG. Basic and acidic residues-rich tracts occupy residues 631–646 and 655–665; these read KVGE…KQPV and EEIKPGHKDEF. Residues 738–757 are compositionally biased toward low complexity; sequence KGEPGTKTITTPTTKNPLTG. Basic and acidic residues-rich tracts occupy residues 759–793 and 845–869; these read KVGE…KDEF and PFDK…KGEP. Over residues 870 to 885 the composition is skewed to low complexity; sequence GTKTITTPTTKNPLTG. Residues 887-921 are compositionally biased toward basic and acidic residues; that stretch reads KVGEGEPTEKVTKQPVDEIVHYGGEEIKPGHKDEF. Positions 994 to 1013 are enriched in low complexity; it reads KGEPGTKTITTPTTKNPLTG. Over residues 1015–1049 the composition is skewed to basic and acidic residues; that stretch reads KVGEGEPTEKITKQPVDEIVHYGGEEIKPGHKDEF. Positions 1122–1141 are enriched in low complexity; the sequence is KGEPGTKTITTPTTKNPLTG. 3 stretches are compositionally biased toward basic and acidic residues: residues 1143 to 1162, 1229 to 1253, and 1271 to 1286; these read KVGE…DEIV, PFDK…KGEP, and KVGE…KQPV. The segment covering 1409-1443 has biased composition (polar residues); the sequence is TPTQSGAPEQPNRSMHSTDNKNQLPDTGENRQANE. Positions 1432–1436 match the LPXTG sorting signal motif; sequence LPDTG. Thr1435 bears the Pentaglycyl murein peptidoglycan amidated threonine mark. The propeptide at 1436-1469 is removed by sortase; sequence GENRQANEGTLVGSLLAIVGSLFIFGRRKKGNEK.

The protein resides in the secreted. Its subcellular location is the cell wall. The chain is Accumulation-associated protein from Staphylococcus epidermidis (strain ATCC 12228 / FDA PCI 1200).